The following is a 273-amino-acid chain: MSDMHSLLIAAILGVVEGLTEFLPVSSTGHMIIVGHLLGFEGDTAKTFEVVIQLGSILAVVVMFWRRLFGLIGIHFGRPLQHEGENKGRLTLIHILLGMIPAVVLGLLFHDTIKSLFNPINVMYALVVGGLLLIAAECLKPKEPRAPGLDDMTYRQAFMIGCFQCLALWPGFSRSGATISGGMLMGVSRYAASEFSFLLAVPMMMGATALDLYKSWGFLTTGDIPMFAVGFITAFVVALIAIKTFLQLIKRISFIPFAIYRFIVAAAVYVVFF.

7 helical membrane-spanning segments follow: residues 6-26 (SLLI…LPVS), 45-65 (AKTF…VMFW), 90-110 (LTLI…LLFH), 116-136 (LFNP…LIAA), 190-210 (YAAS…ATAL), 222-242 (GDIP…LIAI), and 252-272 (ISFI…YVVF).

This sequence belongs to the UppP family.

The protein resides in the cell inner membrane. It catalyses the reaction di-trans,octa-cis-undecaprenyl diphosphate + H2O = di-trans,octa-cis-undecaprenyl phosphate + phosphate + H(+). Catalyzes the dephosphorylation of undecaprenyl diphosphate (UPP). Confers resistance to bacitracin. The chain is Undecaprenyl-diphosphatase from Escherichia coli O127:H6 (strain E2348/69 / EPEC).